The chain runs to 170 residues: Transcriptional repressor NrdR (170 aa).

A zinc finger spans residues 3 to 34; the sequence is CPFCGTQDTKVVDSRLVSEGAQVRRRRTCIHC. Residues 49–139 enclose the ATP-cone domain; the sequence is PKLIKSDGSR…VYRSFKDISE (91 aa). A disordered region spans residues 151-170; it reads SVSIPKSKKTAPESKKEDQA. Over residues 160–170 the composition is skewed to basic and acidic residues; the sequence is TAPESKKEDQA.

It belongs to the NrdR family. Requires Zn(2+) as cofactor.

Negatively regulates transcription of bacterial ribonucleotide reductase nrd genes and operons by binding to NrdR-boxes. The polypeptide is Transcriptional repressor NrdR (Marinomonas sp. (strain MWYL1)).